The following is a 1192-amino-acid chain: Protein FAM83H (1192 aa).

5 disordered regions span residues 435 to 542, 557 to 661, 695 to 720, 737 to 1082, and 1094 to 1145; these read EGMG…VKQG, DGGE…LAEP, SKLE…ESEP, LSRE…SNII, and ILEQ…ERDN. Basic and acidic residues predominate over residues 437–447; it reads MGHDDRGHYDR. 2 stretches are compositionally biased toward polar residues: residues 523–538 and 629–652; these read QLFS…QDPS and SDLG…ASST. 2 stretches are compositionally biased toward basic and acidic residues: residues 737–759 and 768–789; these read LSRE…KHAS and DTKE…EENK. Positions 790–810 are enriched in polar residues; that stretch reads VTQPTVPSASQQITSSLNMND. A compositionally biased stretch (basic and acidic residues) spans 820–834; that stretch reads DQQEKRKTSKLELDL. A compositionally biased stretch (polar residues) spans 861–878; it reads TSEQSTVKAQEPTVSQTD. 2 stretches are compositionally biased toward basic and acidic residues: residues 880–892 and 914–925; these read VPHR…KPKP and APKKEPVKEPTK. Positions 926–946 are enriched in low complexity; it reads SLKPFPSPKFLKPFKSSQSSS. A compositionally biased stretch (basic and acidic residues) spans 994-1005; it reads ESKDTKALDFLK. Residues 1068–1082 show a composition bias toward polar residues; that stretch reads KPTTSRYQSSTSNII. The span at 1107 to 1122 shows a compositional bias: basic and acidic residues; the sequence is QQNEESGKGDGGKDDV.

The protein belongs to the FAM83 family.

The protein resides in the cytoplasm. It localises to the cytoskeleton. Functionally, may play a role in keratin cytoskeleton disassembly. This chain is Protein FAM83H, found in Danio rerio (Zebrafish).